The primary structure comprises 459 residues: DNA-binding protein P3A2 (459 aa).

The disordered stretch occupies residues 1–25; the sequence is MMISEDISEPSSPDTPFDDSDLLNS.

Belongs to the NRF1/Ewg family.

It is found in the nucleus. Functionally, transcriptional regulator that interacts with specific sites in the control region of the cyIIIa actin gene. Also binds specifically to similar target sites located in the regulatory region of the SM50 gene. The chain is DNA-binding protein P3A2 from Strongylocentrotus purpuratus (Purple sea urchin).